We begin with the raw amino-acid sequence, 284 residues long: Trimeric intracellular cation channel type B-A (284 aa).

Topologically, residues 1–15 (MESLSELSVQFSQLS) are lumenal. The helical transmembrane segment at 16 to 33 (MFPFFDMAHYVVSVMSAR) threads the bilayer. Topologically, residues 34-46 (EQAGALDIAARSP) are cytoplasmic. A helical membrane pass occupies residues 47–68 (MASWFSAMLYCFGGGILSSILL). Residues 69 to 79 (AEPPIAVLSNT) lie on the Lumenal side of the membrane. Residues 80–99 (TNIMLASTIWYMVYYFPYDL) traverse the membrane as a helical segment. Residues 100–102 (FYN) are Cytoplasmic-facing. A helical membrane pass occupies residues 103-121 (CFFFLPIRLIIAGMKEVTR). Residues K117 and R121 each coordinate a 1,2-diacyl-sn-glycero-3-phospho-(1D-myo-inositol-4,5-bisphosphate). Residues 122 to 137 (TWKILSGVTHAHSHYK) lie on the Lumenal side of the membrane. Residues 138 to 155 (DALLVMITIGWARGAGGG) form a helical membrane-spanning segment. The Cytoplasmic portion of the chain corresponds to 156-177 (LISNFEQLVRGVWKPESNEFLK). The chain crosses the membrane as a helical span at residues 178-195 (MSYPVKVTLIGAVLFTLQ). At 196-206 (HGHYLPISRHN) the chain is on the lumenal side. A helical membrane pass occupies residues 207 to 224 (LMLIYTMFLVLIKVTMML). Residues 225–284 (THSTASPFLPLETPLQRILFGQRQKPSEVRQSASSSGAKGKPSKKTLDKDSGEQSKKKDS) are Cytoplasmic-facing. Residues 246–284 (QRQKPSEVRQSASSSGAKGKPSKKTLDKDSGEQSKKKDS) form a disordered region. The span at 269-284 (KTLDKDSGEQSKKKDS) shows a compositional bias: basic and acidic residues.

This sequence belongs to the TMEM38 family. In terms of assembly, homotrimer; conformation seems to be controled by binding to diacylglycerol (DAG).

It is found in the endoplasmic reticulum membrane. The catalysed reaction is K(+)(in) = K(+)(out). Channel activity is activated by increased cytosolic Ca(2+) levels and blocked by luminal high Ca(2+) levels. In terms of biological role, intracellular monovalent cation channel required for maintenance of rapid intracellular calcium release. Acts as a potassium counter-ion channel that functions in synchronization with calcium release from intracellular stores. Activated by increased cytosolic Ca(2+) levels. The sequence is that of Trimeric intracellular cation channel type B-A (tmem38b-a) from Xenopus laevis (African clawed frog).